The sequence spans 95 residues: Large ribosomal subunit protein bL28 (95 aa).

This sequence belongs to the bacterial ribosomal protein bL28 family.

The protein is Large ribosomal subunit protein bL28 of Zymomonas mobilis subsp. mobilis (strain ATCC 31821 / ZM4 / CP4).